A 333-amino-acid chain; its full sequence is Protein 2 (333 aa).

2 disordered regions span residues 1-41 (MTGR…SENA) and 57-84 (LGAG…LPPT). Polar residues predominate over residues 24–33 (QETTKQTTSA). The segment covering 62–79 (DYDETEADPADTYGDTEA) has biased composition (acidic residues).

In Lactuca sativa (Garden lettuce), this protein is Protein 2.